The following is a 466-amino-acid chain: NADPH:adrenodoxin oxidoreductase, mitochondrial (466 aa).

FAD is bound by residues A40, E61, L69, and L105. NADP(+) is bound by residues 176–179 (QGNV), 220–221 (RR), and E232. FAD is bound by residues W379 and 386–388 (GVI). Position 386 (G386) interacts with NADP(+).

This sequence belongs to the ferredoxin--NADP reductase type 1 family. The cofactor is FAD. Expressed predominantly in prothoracic gland of the larval ring gland and nurse cells of the adult ovary. Low expression is all adult tissues examined.

Its subcellular location is the mitochondrion inner membrane. It catalyses the reaction 2 reduced [adrenodoxin] + NADP(+) + H(+) = 2 oxidized [adrenodoxin] + NADPH. Its pathway is steroid metabolism; cholesterol metabolism. Its function is as follows. Required for synthesis of steroid hormones, for olfactory sensory behavior and completion of the second larval molt (a steroid mediated developmental transition) and pupariation. This Drosophila melanogaster (Fruit fly) protein is NADPH:adrenodoxin oxidoreductase, mitochondrial (dare).